We begin with the raw amino-acid sequence, 510 residues long: 2,3-bisphosphoglycerate-independent phosphoglycerate mutase (510 aa).

Residues Asp13 and Ser63 each contribute to the Mn(2+) site. Ser63 functions as the Phosphoserine intermediate in the catalytic mechanism. Substrate contacts are provided by residues His124, 154 to 155 (RD), Arg186, Arg192, 262 to 265 (RADR), and Lys334. 5 residues coordinate Mn(2+): Asp401, His405, Asp442, His443, and His461.

It belongs to the BPG-independent phosphoglycerate mutase family. As to quaternary structure, monomer. Mn(2+) is required as a cofactor.

The enzyme catalyses (2R)-2-phosphoglycerate = (2R)-3-phosphoglycerate. Its pathway is carbohydrate degradation; glycolysis; pyruvate from D-glyceraldehyde 3-phosphate: step 3/5. Functionally, catalyzes the interconversion of 2-phosphoglycerate and 3-phosphoglycerate. This is 2,3-bisphosphoglycerate-independent phosphoglycerate mutase from Aliivibrio fischeri (strain MJ11) (Vibrio fischeri).